A 518-amino-acid polypeptide reads, in one-letter code: Nitrogenase iron-iron protein alpha chain (518 aa).

2 residues coordinate [8Fe-7S] cluster: Cys49 and Cys75. The [8Fe-9S-C-homocitryl] cluster site is built by Cys257 and His423.

In terms of assembly, hexamer of two alpha, two beta, and two delta chains. [8Fe-7S] cluster serves as cofactor. [8Fe-9S-C-homocitryl] cluster is required as a cofactor.

It carries out the reaction N2 + 8 reduced [2Fe-2S]-[ferredoxin] + 16 ATP + 16 H2O = H2 + 8 oxidized [2Fe-2S]-[ferredoxin] + 2 NH4(+) + 16 ADP + 16 phosphate + 6 H(+). Functionally, this iron-iron protein is part of the nitrogenase complex that catalyzes the key enzymatic reactions in nitrogen fixation. Other nitrogenase complexes utilize a molybdenum-iron protein or a vanadium-iron protein. This chain is Nitrogenase iron-iron protein alpha chain (anfD), found in Ruminiclostridium hungatei (Clostridium hungatei).